A 785-amino-acid chain; its full sequence is AP-1 complex subunit gamma-like 2 (785 aa).

Residues 369-379 (LSLALVNSSNV) are essential for ubiquitin-binding. Positions 592–617 (GPQADEEAKESKEAAQLSEAAPVPTE) are disordered. Residues 665–780 (APIPDLKVFE…QEIFEVNNLP (116 aa)) form the GAE domain.

This sequence belongs to the adaptor complexes large subunit family. May interact with AP1S1/Sigma1A-adaptin and AP1S2/Sigma1B-adaptin. Probably does not interact with APB1. Interacts (via GAE domain) with RABEP1, NECAP1, CLINT1 and AFTPH/aftiphilin. As to quaternary structure, (Microbial infection) Interacts with HBV major surface antigen L. Interacts with HBV core protein C in a ubiquitin-dependent manner. In terms of tissue distribution, expressed in all but one (skeletal muscle) tissues examined.

The protein localises to the golgi apparatus membrane. It localises to the cytoplasmic vesicle membrane. Its subcellular location is the endosome membrane. Functionally, may function in protein sorting in late endosomes or multivesucular bodies (MVBs). (Microbial infection) Involved in MVB-assisted maturation of hepatitis B virus (HBV). This Homo sapiens (Human) protein is AP-1 complex subunit gamma-like 2 (AP1G2).